A 354-amino-acid polypeptide reads, in one-letter code: Uroporphyrinogen decarboxylase (354 aa).

Substrate-binding positions include 27–31 (RQAGR), D77, Y154, S209, and H327.

This sequence belongs to the uroporphyrinogen decarboxylase family. Homodimer.

Its subcellular location is the cytoplasm. The catalysed reaction is uroporphyrinogen III + 4 H(+) = coproporphyrinogen III + 4 CO2. It participates in porphyrin-containing compound metabolism; protoporphyrin-IX biosynthesis; coproporphyrinogen-III from 5-aminolevulinate: step 4/4. In terms of biological role, catalyzes the decarboxylation of four acetate groups of uroporphyrinogen-III to yield coproporphyrinogen-III. This chain is Uroporphyrinogen decarboxylase, found in Shewanella baltica (strain OS185).